A 115-amino-acid polypeptide reads, in one-letter code: Photosystem II reaction center Psb28 protein (115 aa).

The protein belongs to the Psb28 family. As to quaternary structure, part of the photosystem II complex.

The protein localises to the plastid. The protein resides in the chloroplast thylakoid membrane. The polypeptide is Photosystem II reaction center Psb28 protein (Cyanidium caldarium (Red alga)).